The primary structure comprises 428 residues: Folylpolyglutamate synthase (428 aa).

Residue 49 to 52 (GKGS) coordinates ATP. Position 73 (serine 73) interacts with Mg(2+). (6R)-5,10-methylenetetrahydrofolyl-(gamma-L-Glu)n contacts are provided by phenylalanine 75 and arginine 82. Residues glutamate 143 and histidine 170 each contribute to the Mg(2+) site. Lysine 185 bears the N6-carboxylysine mark. Residues asparagine 264, arginine 300, and 313–316 (DGAH) each bind ATP. Serine 417 is a binding site for (6R)-5,10-methylenetetrahydrofolyl-(gamma-L-Glu)n.

This sequence belongs to the folylpolyglutamate synthase family. In terms of assembly, monomer. Mg(2+) is required as a cofactor.

The enzyme catalyses (6S)-5,6,7,8-tetrahydrofolyl-(gamma-L-Glu)(n) + L-glutamate + ATP = (6S)-5,6,7,8-tetrahydrofolyl-(gamma-L-Glu)(n+1) + ADP + phosphate + H(+). It catalyses the reaction (6R)-5,10-methylenetetrahydrofolyl-(gamma-L-Glu)(n) + L-glutamate + ATP = (6R)-5,10-methylenetetrahydrofolyl-(gamma-L-Glu)(n+1) + ADP + phosphate + H(+). The catalysed reaction is 10-formyltetrahydrofolyl-(gamma-L-Glu)(n) + L-glutamate + ATP = 10-formyltetrahydrofolyl-(gamma-L-Glu)(n+1) + ADP + phosphate + H(+). With respect to regulation, competitively inhibited by adenosine 5'-(3-thio)triphosphate and beta,gamma-methylene-ATP. Its function is as follows. Involved in the conversion of folates to polyglutamate derivatives, and likely functions in the retention of cellular folate pools. Catalyzes successive MgATP-dependent additions of glutamate to a pteroylmonoglutamate substrate, with a high preference for 5,10-methylenetetrahydrofolate (mTHF). Thus, metabolizes mTHF to the tetraglutamate derivative, but longer glutamate chain length products are not observed. Tetrahydrofolate (H4PteGlu) and 10-formyl-H4PteGlu are poorer folate substrates. In contrast to E.coli FolC, this enzyme does not display dihydrofolate synthase activity. The chain is Folylpolyglutamate synthase from Lacticaseibacillus casei (Lactobacillus casei).